The sequence spans 535 residues: cAMP-regulated D2 protein (535 aa).

A signal peptide spans 1-20; the sequence is MNKLLVFILLLLLLINISFA. A disulfide bridge connects residues Cys89 and Cys109. The Acyl-ester intermediate role is filled by Ser213. Cys265 and Cys272 are oxidised to a cystine. Catalysis depends on charge relay system residues Glu338 and His440. N-linked (GlcNAc...) asparagine glycosylation occurs at Asn500.

Belongs to the type-B carboxylesterase/lipase family.

The protein localises to the cytoplasmic vesicle. The protein resides in the esterosome membrane. This chain is cAMP-regulated D2 protein (D2), found in Dictyostelium discoideum (Social amoeba).